The chain runs to 174 residues: Ubiquitin-like protein 4B (174 aa).

The region spanning 1–76 (MFLTVKLLLG…INVIMQPLEK (76 aa)) is the Ubiquitin-like domain. Residues 141-156 (EPHVEPAGERELEAKA) are compositionally biased toward basic and acidic residues. Positions 141-174 (EPHVEPAGERELEAKARPQSSCDMEEKEEAAADQ) are disordered. Over residues 163-174 (DMEEKEEAAADQ) the composition is skewed to acidic residues.

The protein resides in the cytoplasm. The protein is Ubiquitin-like protein 4B (UBL4B) of Homo sapiens (Human).